A 227-amino-acid polypeptide reads, in one-letter code: A-type potassium channel modulatory protein KCNIP1 (227 aa).

One can recognise an EF-hand 1; degenerate domain in the interval 38–94 (LEMTMVCHRPEGLEQLEAQTNFTKRELQVLYRGFKNECPSGVVNEETFKQIYAQFFP). EF-hand domains follow at residues 97 to 132 (DAST…LLRG), 133 to 168 (TVHE…IYDM), and 181 to 216 (TPRQ…DDNI). The Ca(2+) site is built by Asp-146, Asn-148, Asp-150, Tyr-152, Glu-157, Asp-194, Asn-196, Asp-198, and Glu-205. Positions 214 to 227 (DNIMRSLQLFQNVM) are interaction with KCND2.

This sequence belongs to the recoverin family. In terms of assembly, component of heteromultimeric potassium channels. Identified in potassium channel complexes containing KCND1, KCND2, KCND3, KCNIP1, KCNIP2, KCNIP3, KCNIP4, DPP6 and DPP10. Part of a heterooctamer composed of the tetrameric channel and four KCNIP1 chains. Probably part of a complex consisting of KCNIP1, KCNIP2 isoform 3 and KCND2. Self-associates to form homodimers and homotetramers. Interacts with KCNIP2 isoform 3 in a calcium-dependent manner. Interacts with KCND2; this interaction mediates the capture of both the N- and C-terminus of KCND2, thus preventing KCND2 N-type inactivation and modulates the channel gating kinetics. Interacts with KCND3; each KCNIP1 monomer interacts with two adjacent KCND3 subunits, through both the N-terminal inactivation ball of a KCND3 subunit and a C-terminal helix from the adjacent KCND3 subunit, clamping them together; this interaction stabilizes the tetrameric form and modulates the channel gating kinetics namely channel activation and inactivation kinetics and rate of recovery from inactivation. Expressed in brain. Found in a subpopulation of neurons widely distributed and enriched in Purkinje cells of the cerebellum and in the reticular thalamic and medial habenular nuclei.

It localises to the cell membrane. It is found in the cytoplasm. Its subcellular location is the cell projection. The protein resides in the dendrite. Regulatory subunit of Kv4/D (Shal)-type voltage-gated rapidly inactivating A-type potassium channels. Regulates channel density, inactivation kinetics and rate of recovery from inactivation in a calcium-dependent and isoform-specific manner. Modulates KCND2/Kv4.2 currents. In vitro, modulates KCND1/Kv4.1 currents. Increases the presence of KCND2 at the cell surface. This is A-type potassium channel modulatory protein KCNIP1 from Mus musculus (Mouse).